Reading from the N-terminus, the 208-residue chain is MIVIKDAHFLTSSSQLFQCPASLTSEMVVLGRSNVGKSSFINTLLGKNLAKSSATPGKTRLANFFSTTWEDKENALRATFNVIDLPGFGYAKVSKSLKKEWEGFLWELLSVRVSIKLFIHLVDARHLDLEIDKNAKENIQALLRPDQAYLSLFTKFDKLNKNEQHRLFLNAPKPFLINTAHFNALSSKYPTLEIVRQTLLKHLLTNPL.

Positions 23–205 (LTSEMVVLGR…RQTLLKHLLT (183 aa)) constitute an EngB-type G domain. GTP-binding positions include 31–38 (GRSNVGKS), 57–61 (GKTRL), 84–87 (DLPG), 154–157 (TKFD), and 182–184 (FNA). 2 residues coordinate Mg(2+): Ser-38 and Thr-59.

This sequence belongs to the TRAFAC class TrmE-Era-EngA-EngB-Septin-like GTPase superfamily. EngB GTPase family. The cofactor is Mg(2+).

In terms of biological role, necessary for normal cell division and for the maintenance of normal septation. The polypeptide is Probable GTP-binding protein EngB (Helicobacter pylori (strain ATCC 700392 / 26695) (Campylobacter pylori)).